The sequence spans 318 residues: Ribosomal RNA small subunit methyltransferase H (318 aa).

Residues 37–39 (GGH), Asp-57, Phe-83, Asp-104, and Gln-111 each bind S-adenosyl-L-methionine.

This sequence belongs to the methyltransferase superfamily. RsmH family.

It localises to the cytoplasm. It catalyses the reaction cytidine(1402) in 16S rRNA + S-adenosyl-L-methionine = N(4)-methylcytidine(1402) in 16S rRNA + S-adenosyl-L-homocysteine + H(+). In terms of biological role, specifically methylates the N4 position of cytidine in position 1402 (C1402) of 16S rRNA. The chain is Ribosomal RNA small subunit methyltransferase H from Neisseria gonorrhoeae (strain NCCP11945).